The following is a 156-amino-acid chain: Flagellar assembly factor FliW (156 aa).

This sequence belongs to the FliW family. Interacts with translational regulator CsrA and flagellin(s).

The protein localises to the cytoplasm. Its function is as follows. Acts as an anti-CsrA protein, binds CsrA and prevents it from repressing translation of its target genes, one of which is flagellin. Binds to flagellin and participates in the assembly of the flagellum. The protein is Flagellar assembly factor FliW of Lachnoclostridium phytofermentans (strain ATCC 700394 / DSM 18823 / ISDg) (Clostridium phytofermentans).